The following is a 463-amino-acid chain: MEKPSREAFEGNNKLLIGIVLSVITFWLFAQSLVNVVPILEDSFNTDIGTVNIAVSITALFSGMFVVGAGGLADKYGRIKLTNIGIILNILGSLLIIISNIPLLLIIGRLIQGLSAACIMPATLSIIKSYYIGKDRQRALSYWSIGSWGGSGVCSFFGGAVATLLGWRWIFILSIIISLIALFLIKGTPETKSKSISLNKFDIKGLVLLVIMLLTLNILITKGSELGVTSLLFITLLAIAIGSFSLFIVLEKRATNPLIDFKLFKNKAYTGATASNFLLNGVAGTLIVANTFVQRGLGYSSLQAGSLSITYLVMVLIMIRVGEKLLQTLGCKKPMLIGTGVLIVGECLISLTFLPEILYVICCIIGYLFFGLGLGIYATPSTDTAIANAPLEKVGVAAGIYKMASALGGAFGVALSGAVYAIVSNMTNIYTGAMIALWLNAGMGILSFVIILLLVPKQNDTQL.

A run of 14 helical transmembrane segments spans residues 17–37, 53–73, 86–106, 107–127, 142–162, 165–185, 201–221, 230–250, 273–293, 299–319, 334–354, 357–377, 403–423, and 435–455; these read IGIV…VNVV, IAVS…GGLA, IILN…LLLI, IGRL…LSII, YWSI…GAVA, LGWR…LFLI, FDIK…ILIT, SLLF…FIVL, TASN…NTFV, YSSL…LIMI, PMLI…LTFL, ILYV…LGIY, MASA…YAIV, and IALW…LLLV.

The protein belongs to the major facilitator superfamily. TCR/Tet family.

The protein resides in the cell membrane. Multidrug efflux pump that acts independently of NorA and is one of the factors that confers resistance against diverse quinolones and chemical compounds. The sequence is that of Quinolone resistance protein NorB (norB) from Staphylococcus aureus (strain Mu3 / ATCC 700698).